The following is a 429-amino-acid chain: Esterase/beta-lactamase LipL (429 aa).

Ser-88 functions as the Acyl-ester intermediate in the catalytic mechanism.

The protein belongs to the beta-lactamase family.

The protein resides in the secreted. Its subcellular location is the cell wall. The protein localises to the cell membrane. It catalyses the reaction a fatty acid ester + H2O = an aliphatic alcohol + a fatty acid + H(+). The enzyme catalyses an acetyl ester + H2O = an aliphatic alcohol + acetate + H(+). The catalysed reaction is a butanoate ester + H2O = an aliphatic alcohol + butanoate + H(+). It carries out the reaction an octanoate ester + H2O = an aliphatic alcohol + octanoate + H(+). It catalyses the reaction decanoate ester + H2O = decanoate + an aliphatic alcohol + H(+). The enzyme catalyses a dodecanoate ester + H2O = an aliphatic alcohol + dodecanoate + H(+). The catalysed reaction is a tetradecanoate ester + H2O = an aliphatic alcohol + tetradecanoate + H(+). It carries out the reaction hexadecanoate ester + H2O = an aliphatic alcohol + hexadecanoate + H(+). It catalyses the reaction octadecanoate ester + H2O = an aliphatic alcohol + octadecanoate + H(+). The enzyme catalyses a hexanoate ester + H2O = an aliphatic alcohol + hexanoate + H(+). The catalysed reaction is a beta-lactam + H2O = a substituted beta-amino acid. With respect to regulation, esterase and beta-lactamase activities are inhibited by the active site residue modifiers phenylmethanesulfonylflouride (PMSF) and diethylpyrocarbonate (DEPC). Shows both esterase and beta-lactamase activities, with a much higher activity against phenyl esters than against beta-lactams. Shows esterase activity against both long-chain and short-chain p-nitrophenol (pNP) esters, with a preference for shorter chain esters. Hydrolyzes substrates containing beta-lactam ring such as nitrocefin and ampicillin. Functions as an immunogen that activates both humoral and cell-mediated responses. The protein is Esterase/beta-lactamase LipL of Mycobacterium tuberculosis (strain ATCC 25618 / H37Rv).